An 81-amino-acid polypeptide reads, in one-letter code: Acyl carrier protein (81 aa).

Positions Ala4 to Lys79 constitute a Carrier domain. Position 39 is an O-(pantetheine 4'-phosphoryl)serine (Ser39).

This sequence belongs to the acyl carrier protein (ACP) family. In terms of processing, 4'-phosphopantetheine is transferred from CoA to a specific serine of apo-ACP by AcpS. This modification is essential for activity because fatty acids are bound in thioester linkage to the sulfhydryl of the prosthetic group.

Its subcellular location is the cytoplasm. The protein operates within lipid metabolism; fatty acid biosynthesis. Functionally, carrier of the growing fatty acid chain in fatty acid biosynthesis. The chain is Acyl carrier protein from Chlorobaculum tepidum (strain ATCC 49652 / DSM 12025 / NBRC 103806 / TLS) (Chlorobium tepidum).